Reading from the N-terminus, the 92-residue chain is MSDNYNYPLDINWSTDEITSVLHFLNQVEKAYESKVDANQLLESYRVFKEIVTSKSQEKQIDREFEKSSGYSTYRAVQKAKEVEKGYFSLGR.

The protein belongs to the UPF0223 family.

The sequence is that of UPF0223 protein SUB0967 from Streptococcus uberis (strain ATCC BAA-854 / 0140J).